The chain runs to 546 residues: FAD-dependent monooxygenase (546 aa).

The N-terminal stretch at 1-17 (MYDVIVVGAGWCGLAAA) is a signal peptide. Residue I106 participates in FAD binding. N239 and N343 each carry an N-linked (GlcNAc...) asparagine glycan.

It belongs to the FAD-binding monooxygenase family. FAD is required as a cofactor.

It functions in the pathway antifungal biosynthesis. Its function is as follows. FAD-dependent monooxygenase; part of the gene cluster that mediates the biosynthesis of the tetrahydropyranyl antifungal agent lanomycin that acts as an inhibitor of CYP51 and blocks the ergosterol biosynthesis. The biosynthesis probably begins with the formation of an hexaketide, followed by methionine mediated alkylation of C-2 and C-6, and methylation of the reduced C-3 oxygen, pyran forming reductive ring closure, oxygenation of C-4, beta-keto reduction, enoyl reduction and dehydration of the remaining oxygens, and finally, acylation with glycine to complete the biosynthesis. This is FAD-dependent monooxygenase from Pyrenophora dematioidea (Helminthosporium dematioideum).